Consider the following 81-residue polypeptide: Sulfur carrier protein TusA (81 aa).

The Cysteine persulfide intermediate role is filled by C19.

This sequence belongs to the sulfur carrier protein TusA family.

Its subcellular location is the cytoplasm. Sulfur carrier protein which probably makes part of a sulfur-relay system. This Shewanella sp. (strain ANA-3) protein is Sulfur carrier protein TusA.